Consider the following 576-residue polypeptide: Eukaryotic translation initiation factor 3 subunit D (576 aa).

The tract at residues 103–176 (DSTKTRFGRG…KDYDKPQRNR (74 aa)) is disordered. Positions 110–122 (GRGGLARGRGQRG) are enriched in gly residues. Over residues 165–176 (GWKDYDKPQRNR) the composition is skewed to basic and acidic residues. Residues 304-318 (TLDMVTVNENAADAP) are RNA gate.

It belongs to the eIF-3 subunit D family. As to quaternary structure, component of the eukaryotic translation initiation factor 3 (eIF-3) complex.

It localises to the cytoplasm. MRNA cap-binding component of the eukaryotic translation initiation factor 3 (eIF-3) complex, which is involved in protein synthesis of a specialized repertoire of mRNAs and, together with other initiation factors, stimulates binding of mRNA and methionyl-tRNAi to the 40S ribosome. The eIF-3 complex specifically targets and initiates translation of a subset of mRNAs involved in cell proliferation. In the eIF-3 complex, eif3d specifically recognizes and binds the 7-methylguanosine cap of a subset of mRNAs. This is Eukaryotic translation initiation factor 3 subunit D from Botryotinia fuckeliana (strain B05.10) (Noble rot fungus).